The primary structure comprises 1168 residues: Transcription-repair-coupling factor (1168 aa).

The region spanning 633–794 is the Helicase ATP-binding domain; it reads DMQKSRPMDR…MLGVRDLSVI (162 aa). An ATP-binding site is contributed by 646-653; sequence GDVGYGKT. A DEEQ box motif is present at residues 747–750; sequence DEEQ. Residues 808-969 form the Helicase C-terminal domain; sequence VLEQNMSFIK…GFKIAMRDLN (162 aa).

In the N-terminal section; belongs to the UvrB family. It in the C-terminal section; belongs to the helicase family. RecG subfamily.

It localises to the cytoplasm. Functionally, couples transcription and DNA repair by recognizing RNA polymerase (RNAP) stalled at DNA lesions. Mediates ATP-dependent release of RNAP and its truncated transcript from the DNA, and recruitment of nucleotide excision repair machinery to the damaged site. This Staphylococcus aureus (strain Mu50 / ATCC 700699) protein is Transcription-repair-coupling factor.